Here is a 301-residue protein sequence, read N- to C-terminus: MKIAVLSRNRHLYSTRRLVEEGINRGHEVKVIDCLHCSMNITSADPKIHYHEEVLEDFDVVIPRIGASVTFYGTAVLRQFEMMGVFPVNESVAITRSRDKLRSLQLLARKGVGMPVTGFANKPDNVPELLKMVGGAPVVIKLLQGTQGIGVVLAETRKAAESVIEAFMGLKADILVQEFIKEAGGADIRCFVIGDKVIAAMKRQGAEGEFRSNLHRGGTASLVRITPEERRTAITAAKAMGLNVAGVDLLRSSRGPLVMEVNSSPGLEGIENATGKNVAGMIINWTEKNYKPWKTKTRGRG.

In terms of domain architecture, ATP-grasp spans 104–287 (LQLLARKGVG…VAGMIINWTE (184 aa)). Residues Lys-141, 178 to 179 (EF), Asp-187, and 211 to 213 (RSN) each bind ATP. Mg(2+) contacts are provided by Asp-248, Glu-260, and Asn-262. Positions 248, 260, and 262 each coordinate Mn(2+).

Belongs to the RimK family. The cofactor is Mg(2+). Mn(2+) serves as cofactor.

The sequence is that of Probable alpha-L-glutamate ligase from Marinobacter nauticus (strain ATCC 700491 / DSM 11845 / VT8) (Marinobacter aquaeolei).